The following is a 694-amino-acid chain: Protein NPGR1 (694 aa).

The tract at residues 12–40 (FEDQPGSPESLATRDFSASGLSSRNGGGD) is disordered. TPR repeat units follow at residues 32 to 65 (LSSR…SLNY), 66 to 101 (EEAR…TPRI), 135 to 168 (LEAI…VENA), 188 to 221 (QKAL…PWNL), 307 to 340 (GERW…SESR), 551 to 584 (TEAW…CYYS), 585 to 618 (PRGW…EPDH), 620 to 654 (PSIV…DPRN), and 655 to 688 (HDAW…ELSA).

Interacts with calmodulin in a calcium-dependent manner. In terms of tissue distribution, expressed in pollen, flowers, fruits and leaves.

The polypeptide is Protein NPGR1 (Arabidopsis thaliana (Mouse-ear cress)).